The following is a 151-amino-acid chain: Neuroglobin (151 aa).

The 149-residue stretch at 1-149 (MERPEPELIR…VVQAMSRGWD (149 aa)) folds into the Globin domain. Heme b contacts are provided by histidine 64 and histidine 96.

Belongs to the globin family. As to quaternary structure, monomer. Homodimer and homotetramer; disulfide-linked. Mainly monomeric but also detected as part of homodimers and homotetramers. Interacts with 14-3-3 proteins; regulates the phosphorylation of NGB. Could interact (ferrous form) with G-alpha(i) proteins (GTP-bound form). Phosphorylated during hypoxia by ERK1/ERK2. Phosphorylation regulates the heme pocket hexacoordination preventing the association of His-64 with the heme metal center. Thereby, promotes the access of dioxygen and nitrite to the heme and stimulates the nitrite reductase activity. Phosphorylation during hypoxia is stabilized by 14-3-3 proteins.

It is found in the cytoplasm. Its subcellular location is the cytosol. The protein resides in the mitochondrion matrix. It catalyses the reaction Fe(III)-heme b-[protein] + nitric oxide + H2O = Fe(II)-heme b-[protein] + nitrite + 2 H(+). In terms of biological role, monomeric globin with a bis-histidyl six-coordinate heme-iron atom through which it can bind dioxygen, carbon monoxide and nitric oxide. Could help transport oxygen and increase its availability to the metabolically active neuronal tissues, though its low quantity in tissues as well as its high affinity for dioxygen, which may limit its oxygen-releasing ability, argue against it. The ferrous/deoxygenated form exhibits a nitrite reductase activity and it could produce nitric oxide which in turn inhibits cellular respiration in response to hypoxia. In its ferrous/deoxygenated state, it may also exhibit GDI (Guanine nucleotide Dissociation Inhibitor) activity toward heterotrimeric G-alpha proteins, thereby regulating signal transduction to facilitate neuroprotective responses in the wake of hypoxia and associated oxidative stress. This is Neuroglobin from Canis lupus familiaris (Dog).